Consider the following 142-residue polypeptide: Hemoglobin subunit alpha (142 aa).

S1 is subject to N-acetylserine. Residues 1 to 142 (SLTDKDKATV…VSLALSERYR (142 aa)) enclose the Globin domain. An O2-binding site is contributed by H59. H88 is a heme b binding site.

This sequence belongs to the globin family. As to quaternary structure, hb1 is a heterotetramer of two alpha chains and two beta-1 chains. Hb2 is a heterotetramer of two alpha chains and two beta-2 chains. In terms of tissue distribution, red blood cells.

Involved in oxygen transport from gills to the various peripheral tissues. This is Hemoglobin subunit alpha (hba) from Pseudaphritis urvillii (Congolli).